A 414-amino-acid polypeptide reads, in one-letter code: Serine hydroxymethyltransferase (414 aa).

(6S)-5,6,7,8-tetrahydrofolate contacts are provided by residues leucine 116 and 120 to 122; that span reads GHL. N6-(pyridoxal phosphate)lysine is present on lysine 224. (6S)-5,6,7,8-tetrahydrofolate contacts are provided by residues glutamate 240 and 348-350; that span reads SPF.

It belongs to the SHMT family. In terms of assembly, homodimer. Pyridoxal 5'-phosphate serves as cofactor.

The protein localises to the cytoplasm. It carries out the reaction (6R)-5,10-methylene-5,6,7,8-tetrahydrofolate + glycine + H2O = (6S)-5,6,7,8-tetrahydrofolate + L-serine. It functions in the pathway one-carbon metabolism; tetrahydrofolate interconversion. Its pathway is amino-acid biosynthesis; glycine biosynthesis; glycine from L-serine: step 1/1. Functionally, catalyzes the reversible interconversion of serine and glycine with tetrahydrofolate (THF) serving as the one-carbon carrier. This reaction serves as the major source of one-carbon groups required for the biosynthesis of purines, thymidylate, methionine, and other important biomolecules. Also exhibits THF-independent aldolase activity toward beta-hydroxyamino acids, producing glycine and aldehydes, via a retro-aldol mechanism. The protein is Serine hydroxymethyltransferase of Campylobacter jejuni (strain RM1221).